A 482-amino-acid polypeptide reads, in one-letter code: Lipoamide acyltransferase component of branched-chain alpha-keto acid dehydrogenase complex, mitochondrial (482 aa).

The N-terminal 61 residues, 1 to 61 (MAAARVLRTW…HSLRTAAVLQ (61 aa)), are a transit peptide targeting the mitochondrion. In terms of domain architecture, Lipoyl-binding spans 64 to 139 (VVQFKLSDIG…YVGKPLIDIE (76 aa)). Lys-105 carries the post-translational modification N6-lipoyllysine. Position 133 is an N6-succinyllysine (Lys-133). The tract at residues 145–160 (DSEEDVVETPAVSHDE) is critical for association with PPM1K. In terms of domain architecture, Peripheral subunit-binding (PSBD) spans 172–209 (LATPAVRRLAMENNIKLSEVVGSGKDGRILKEDILSFL). The residue at position 196 (Lys-196) is an N6-acetyllysine; alternate. Lys-196 is modified (N6-succinyllysine; alternate). Residue Lys-202 is modified to N6-acetyllysine. Residues 217–252 (LPPSPKSEITPPPPQPKDRTFPTPIAKPPVFTGKDR) form a disordered region. The segment covering 218 to 231 (PPSPKSEITPPPPQ) has biased composition (pro residues). Position 220 is a phosphoserine (Ser-220). Residues Lys-243 and Lys-250 each carry the N6-acetyllysine modification. At Lys-261 the chain carries N6-succinyllysine. An N6-acetyllysine; alternate modification is found at Lys-289. Position 289 is an N6-succinyllysine; alternate (Lys-289). Arg-291 serves as a coordination point for CoA. Lys-295 and Lys-304 each carry N6-acetyllysine. 8 residues coordinate CoA: Ser-306, Asp-349, Gln-378, Ser-399, Asn-400, Ser-403, Gly-424, and Ile-426. Lys-435 carries the N6-acetyllysine modification. Lys-440 is subject to N6-acetyllysine; alternate. Lys-440 is subject to N6-succinyllysine; alternate. Active-site residues include His-452 and Asp-456.

This sequence belongs to the 2-oxoacid dehydrogenase family. Forms a 24-polypeptide structural core with octahedral symmetry that represents the E2 component of the branched-chain alpha-ketoacid dehydrogenase (BCKDH) complex. The BCKDH complex is composed of three major building blocks E1, E2 and E3. It is organized around E2, a 24-meric cubic core composed of DBT, to which are associated 6 to 12 copies of E1, and approximately 6 copies of the dehydrogenase E3, a DLD dimer. Interacts with PPM1K with a 24:1 stoichiometry; the N-terminal region (residues 49-61) of PPM1K and C-terminal linker of the lipoyl domain of DBT/E2 (residues 145-160) are critical for this interaction whereas the lipoyl prosthetic group is dispensable. This interaction requires colocalization in mitochondria. PPM1K competes with BCKDK for binding to DBT; this interaction is modulated by branched-chain alpha-keto acids (BCKAs). At steady state, BCKDH holoenzyme preferentially binds BCKDK and BCKDHA is phosphorylated. In response to high levels of BCKAs, BCKDK is replaced by PPM1K leading to BCKDHA dephosphorylation. (R)-lipoate serves as cofactor.

It is found in the mitochondrion matrix. It carries out the reaction N(6)-[(R)-dihydrolipoyl]-L-lysyl-[protein] + 2-methylpropanoyl-CoA = N(6)-[(R)-S(8)-2-methylpropanoyldihydrolipoyl]-L-lysyl-[protein] + CoA. The branched-chain alpha-keto dehydrogenase complex catalyzes the overall conversion of alpha-keto acids to acyl-CoA and CO(2). It contains multiple copies of three enzymatic components: branched-chain alpha-keto acid decarboxylase (E1), lipoamide acyltransferase (E2) and lipoamide dehydrogenase (E3). Within this complex, the catalytic function of this enzyme is to accept, and to transfer to coenzyme A, acyl groups that are generated by the branched-chain alpha-keto acid decarboxylase component. The polypeptide is Lipoamide acyltransferase component of branched-chain alpha-keto acid dehydrogenase complex, mitochondrial (Dbt) (Mus musculus (Mouse)).